The chain runs to 185 residues: Jasmonate-induced protein homolog (185 aa).

Belongs to the jasmonate-induced protein family.

This chain is Jasmonate-induced protein homolog, found in Atriplex canescens (Fourwing saltbush).